A 306-amino-acid chain; its full sequence is Non-specific ribonucleoside hydrolase RihC (306 aa).

H235 is an active-site residue.

Belongs to the IUNH family. RihC subfamily.

In terms of biological role, hydrolyzes both purine and pyrimidine ribonucleosides with a broad-substrate specificity. The polypeptide is Non-specific ribonucleoside hydrolase RihC (Salmonella dublin (strain CT_02021853)).